Consider the following 370-residue polypeptide: MKPSIYAFSQANLVDWILENGEKKFRATQIWEWLYRSRVQSFAEMTNLPKSLIEKLEEHFVVNPLKQRIVQESKDGTIKYLFELPDGMLIETVLMHQHYGLSVCVTTQVGCNIGCTFCASGLIPKQRDLTSGEIVAQIMLVQKYLDERNQNERVSHIVVMGIGEPLDNYDNVMTFLRVVNDDKGLAIGARHITVSTSGLAPKIREFAREGVQVNLAVSLHAPNNDLRSSIMRINRKFPIEVLFEAIEDYIKVTNRRVTFEYIMLNEVNDGVEQAQELADLTKNIRKLSYINLIPYNPVSEHDQYSRSTKERTLAFFDVLKKNGVNCVVRQEHGTDIDAACGQLRSNTLKKDREKARARIAAAKAKAGIRA.

Glu91 (proton acceptor) is an active-site residue. A Radical SAM core domain is found at 97 to 329 (QHYGLSVCVT…KKNGVNCVVR (233 aa)). Cys104 and Cys340 are disulfide-bonded. [4Fe-4S] cluster contacts are provided by Cys111, Cys115, and Cys118. S-adenosyl-L-methionine-binding positions include 163 to 164 (GE), Ser195, 218 to 220 (SLH), and Asn296. Residue Cys340 is the S-methylcysteine intermediate of the active site.

The protein belongs to the radical SAM superfamily. RlmN family. [4Fe-4S] cluster is required as a cofactor.

The protein localises to the cytoplasm. The enzyme catalyses adenosine(2503) in 23S rRNA + 2 reduced [2Fe-2S]-[ferredoxin] + 2 S-adenosyl-L-methionine = 2-methyladenosine(2503) in 23S rRNA + 5'-deoxyadenosine + L-methionine + 2 oxidized [2Fe-2S]-[ferredoxin] + S-adenosyl-L-homocysteine. The catalysed reaction is adenosine(37) in tRNA + 2 reduced [2Fe-2S]-[ferredoxin] + 2 S-adenosyl-L-methionine = 2-methyladenosine(37) in tRNA + 5'-deoxyadenosine + L-methionine + 2 oxidized [2Fe-2S]-[ferredoxin] + S-adenosyl-L-homocysteine. In terms of biological role, specifically methylates position 2 of adenine 2503 in 23S rRNA and position 2 of adenine 37 in tRNAs. This is Probable dual-specificity RNA methyltransferase RlmN from Streptococcus suis (strain 98HAH33).